A 110-amino-acid chain; its full sequence is UPF0060 membrane protein Mfla_2554 (110 aa).

Transmembrane regions (helical) follow at residues 7–27 (VALF…PYLW), 33–53 (SPLL…LLTL), 61–81 (VYAA…WVVD), and 83–103 (IIPS…MAII).

It belongs to the UPF0060 family.

Its subcellular location is the cell inner membrane. This Methylobacillus flagellatus (strain ATCC 51484 / DSM 6875 / VKM B-1610 / KT) protein is UPF0060 membrane protein Mfla_2554.